The primary structure comprises 127 residues: Large ribosomal subunit protein bL21 (127 aa).

Belongs to the bacterial ribosomal protein bL21 family. As to quaternary structure, part of the 50S ribosomal subunit. Contacts protein L20.

This protein binds to 23S rRNA in the presence of protein L20. The chain is Large ribosomal subunit protein bL21 from Synechococcus sp. (strain ATCC 27144 / PCC 6301 / SAUG 1402/1) (Anacystis nidulans).